The sequence spans 492 residues: Probable cytochrome P450 310a1 (492 aa).

C428 is a heme binding site.

This sequence belongs to the cytochrome P450 family. Heme is required as a cofactor.

Its subcellular location is the endoplasmic reticulum membrane. The protein localises to the microsome membrane. Its function is as follows. May be involved in the metabolism of insect hormones and in the breakdown of synthetic insecticides. This chain is Probable cytochrome P450 310a1 (Cyp310a1), found in Drosophila melanogaster (Fruit fly).